Reading from the N-terminus, the 505-residue chain is L-arabinose isomerase (505 aa).

4 residues coordinate Mn(2+): E308, E335, H352, and H453.

It belongs to the arabinose isomerase family. The cofactor is Mn(2+).

The catalysed reaction is beta-L-arabinopyranose = L-ribulose. Its pathway is carbohydrate degradation; L-arabinose degradation via L-ribulose; D-xylulose 5-phosphate from L-arabinose (bacterial route): step 1/3. Its function is as follows. Catalyzes the conversion of L-arabinose to L-ribulose. The sequence is that of L-arabinose isomerase from Bifidobacterium longum (strain DJO10A).